We begin with the raw amino-acid sequence, 420 residues long: Glycerol-3-phosphate dehydrogenase [NAD(+)] 2, chloroplastic (420 aa).

A chloroplast-targeting transit peptide spans 1-45; sequence MAASVQPACLDLHFSGKHPPLLKHNAIIVRCVSSPNVIPEADSIS. Residues 94–99, F171, K194, and A228 contribute to the NAD(+) site; that span reads GGGSFG. K194 contributes to the substrate binding site. The Proton acceptor role is filled by K279. The NAD(+) site is built by R343 and E369. 343-344 is a substrate binding site; that stretch reads RN.

This sequence belongs to the NAD-dependent glycerol-3-phosphate dehydrogenase family.

The protein localises to the plastid. Its subcellular location is the chloroplast. It catalyses the reaction sn-glycerol 3-phosphate + NAD(+) = dihydroxyacetone phosphate + NADH + H(+). It participates in membrane lipid metabolism; glycerophospholipid metabolism. In terms of biological role, required to supply glycerol-3-phosphate in the chloroplast for the synthesis of glycerolipids. Required for activation of systemic acquired resistance (SAR). Provision of glycerol-3-phosphate may be involved in generating lipid signals necessary for mediating defense responses and SAR. This Arabidopsis thaliana (Mouse-ear cress) protein is Glycerol-3-phosphate dehydrogenase [NAD(+)] 2, chloroplastic (GLY1).